The primary structure comprises 69 residues: MTRDTPEDVSTAGAKDILDVLNLLKGGEEKISEVELKLDEMEKKMDSLLVQLEDLHRDNNDLAKSSSQK.

A coiled-coil region spans residues 21–64 (LNLLKGGEEKISEVELKLDEMEKKMDSLLVQLEDLHRDNNDLAK).

This is an uncharacterized protein from Saccharomyces cerevisiae (strain ATCC 204508 / S288c) (Baker's yeast).